We begin with the raw amino-acid sequence, 84 residues long: Toxin Tb1 (84 aa).

The signal sequence occupies residues 1-20 (MKGMILFISCLLLIGIVVEC). The LCN-type CS-alpha/beta domain maps to 21-82 (KEGYLMDHEG…VWDRATNKCG (62 aa)). Disulfide bonds link Cys-31-Cys-81, Cys-35-Cys-57, Cys-43-Cys-62, and Cys-47-Cys-64. Cys-81 bears the Cysteine amide mark.

Belongs to the long (4 C-C) scorpion toxin superfamily. Sodium channel inhibitor family. Beta subfamily. Expressed by the venom gland.

The protein resides in the secreted. In terms of biological role, beta toxins bind voltage-independently at site-4 of sodium channels (Nav) and shift the voltage of activation toward more negative potentials thereby affecting sodium channel activation and promoting spontaneous and repetitive firing. Is lethal to mice. The protein is Toxin Tb1 of Tityus bahiensis (Brazilian scorpion).